A 577-amino-acid polypeptide reads, in one-letter code: Putative pseudouridine synthase B0024.11 (577 aa).

Asp-188 acts as the Nucleophile in catalysis. Positions 265–472 constitute a TRUD domain; that stretch reads GFINYFGTQR…GESSRCLFVE (208 aa). A compositionally biased stretch (basic and acidic residues) spans 538 to 565; the sequence is KAMRDASFKTRGDDEKTEENVLEEKGSD. The interval 538 to 577 is disordered; the sequence is KAMRDASFKTRGDDEKTEENVLEEKGSDDANELNLVSEDQ.

The protein belongs to the pseudouridine synthase TruD family.

The enzyme catalyses a uridine in tRNA = a pseudouridine in tRNA. This chain is Putative pseudouridine synthase B0024.11, found in Caenorhabditis elegans.